Consider the following 210-residue polypeptide: MNKQRIYSIVAILLFVVGGVLIGKPFYDGYQAEKKQTENVQAVQKMDYEKHETEFVDASKIDQPDLAEVANASLDKKQVIGRISIPSVSLELPVLKSSTEKNLLSGAATVKENQVMGKGNYALAGHNMSKKGVLFSDIASLKKGDKIYLYDNENEYEYAVTGVSEVTPDKWEVVEDHGKDEITLITCVSVKDNSKRYVVAGDLVGTKAKK.

Over 1–5 the chain is Cytoplasmic; it reads MNKQR. Residues 6–26 traverse the membrane as a helical segment; sequence IYSIVAILLFVVGGVLIGKPF. The Extracellular portion of the chain corresponds to 27-210; that stretch reads YDGYQAEKKQ…GDLVGTKAKK (184 aa). Residue H126 is the Proton donor/acceptor of the active site. Catalysis depends on C187, which acts as the Acyl-thioester intermediate.

This sequence belongs to the bacterial sortase family. Class A subfamily.

Its subcellular location is the cell membrane. Its activity is regulated as follows. Inhibited by thiol-reactive reagents. Transpeptidase that anchors surface proteins to the cell wall. Recognizes and modifies its substrate by proteolytic cleavage of a C-terminal sorting signal. Following cleavage, a covalent intermediate is formed via a thioester bond between the sortase and its substrate, which is then transferred and covalently attached to the cell wall. This sortase recognizes a Leu-Pro-x-Thr-Gly (LPXTG) motif, which is cleaved by the sortase between the threonine and glycine residues. Important for growth in macrophages. May be critical in the early stages of inhalation anthrax. This Bacillus anthracis protein is Sortase A.